The sequence spans 3391 residues: Genome polyprotein (3391 aa).

An interaction with host EXOC1 region spans residues 1–15 (MNDQRKKAKNTPFNM). Over 1–101 (MNDQRKKAKN…LNILNRRRRS (101 aa)) the chain is Cytoplasmic. The tract at residues 37 to 72 (MLQGRGPLKLYMALVAFLRFLTIPPTAGILKRWGTI) is hydrophobic; homodimerization of capsid protein C. The propeptide at 101-114 (SAGMIIMLIPTVMA) is ER anchor for the capsid protein C, removed in mature form by serine protease NS3. Residues 102-119 (AGMIIMLIPTVMAFHLTT) traverse the membrane as a helical segment. Topologically, residues 120 to 242 (RNGEPHMIVS…HVQRIETWIL (123 aa)) are extracellular. N-linked (GlcNAc...) asparagine; by host glycosylation is present at N183. Residues 243 to 260 (RHPGFTMMAAILAYTIGT) form a helical membrane-spanning segment. A topological domain (cytoplasmic) is located at residue T261. A helical membrane pass occupies residues 262–280 (HFQRALIFILLTAVTPSMT). The Extracellular portion of the chain corresponds to 281 to 725 (MRCIGMSNRD…LHQVFGAIYG (445 aa)). 4 disulfides stabilise this stretch: C283/C310, C340/C401, C354/C385, and C372/C396. N347 is a glycosylation site (N-linked (GlcNAc...) asparagine; by host). Residues 378 to 391 (DRGWGNGCGLFGKG) are fusion peptide. N-linked (GlcNAc...) asparagine; by host glycosylation occurs at N433. Cystine bridges form between C465-C565 and C582-C613. Residues 726–746 (AAFSGVSWTMKILIGVIITWI) traverse the membrane as a helical segment. Residues 747–752 (GMNSRS) lie on the Cytoplasmic side of the membrane. The helical transmembrane segment at 753 to 773 (TSLSVTLVLVGIVTLYLGVMV) threads the bilayer. The Extracellular portion of the chain corresponds to 774–1195 (QADSGCVVSW…MVGATMTDDI (422 aa)). Intrachain disulfides connect C779-C790, C830-C918, C954-C998, C1055-C1104, C1066-C1088, and C1087-C1091. Residues N905 and N982 are each glycosylated (N-linked (GlcNAc...) asparagine; by host). 2 N-linked (GlcNAc...) asparagine; by host glycosylation sites follow: N1134 and N1174. Residues 1196–1220 (GMGVTYLALLAAFKVRPTFAAGLLL) form a helical membrane-spanning segment. Residues 1221–1226 (RKLTSK) are Cytoplasmic-facing. The helical transmembrane segment at 1227–1245 (ALMMTTIGIVLSSQSTTPE) threads the bilayer. Residues 1246–1269 (TILELTDALALGMMVLKMVRNMEK) are Lumenal-facing. The chain crosses the membrane as a helical span at residues 1270–1290 (YQLAVTIMAILCVPNAVILQN). Residue A1291 is a topological domain, cytoplasmic. The chain crosses the membrane as a helical span at residues 1292–1310 (WKVSCTILAVVSVSPLFLT). Residues 1311–1317 (SSQQKTD) are Lumenal-facing. A helical membrane pass occupies residues 1318 to 1338 (WIPLALTIKGLNPTAIFLTTL). Residues 1339-1346 (SRTSKKRS) are Cytoplasmic-facing. The helical transmembrane segment at 1347 to 1367 (WPLNEAIMAVGMVSILASSLL) threads the bilayer. The Lumenal portion of the chain corresponds to 1368 to 1370 (KND). Residues 1371–1391 (IPMTGPLVAGGPLTVCYVLTG) form a helical membrane-spanning segment. The Cytoplasmic portion of the chain corresponds to 1392-1447 (RSADLELERAADVKWEDQAEISGSSPILSITISEDGSMSIKNEEEEQTLTILIRTG). Residues 1398–1437 (LERAADVKWEDQAEISGSSPILSITISEDGSMSIKNEEEE) are interacts with and activates NS3 protease. Positions 1448–1468 (LLVISGLFPVSIPITAAAWYL) form an intramembrane region, helical. Topologically, residues 1469-2147 (WEVKKQRAGV…LSELPETLET (679 aa)) are cytoplasmic. A Peptidase S7 domain is found at 1476–1653 (AGVLWDVPSP…EKSIEDNPEI (178 aa)). Active-site charge relay system; for serine protease NS3 activity residues include H1526, D1550, and S1610. In terms of domain architecture, Helicase ATP-binding spans 1655–1811 (DDIFRKRRLT…QSNAPIIDEE (157 aa)). The segment at 1659-1662 (RKRR) is important for RNA-binding. 1668–1675 (LHPGAGKT) contacts ATP. A DEAH box motif is present at residues 1759-1762 (DEAH). One can recognise a Helicase C-terminal domain in the interval 1821–1988 (SGHEWVTDFK…IIPSMFEPER (168 aa)). N6-acetyllysine; by host is present on K1863. The helical transmembrane segment at 2148-2168 (LLLLTLLATVTGGILLFLMSG) threads the bilayer. The Lumenal segment spans residues 2169–2170 (RG). Residues 2171–2191 (IGKMTLGMCCIITASILLWYA) constitute an intramembrane region (helical). Position 2192 (Q2192) is a topological domain, lumenal. A helical membrane pass occupies residues 2193–2213 (IQPHWIAASIILEFFLIVLLI). At 2214 to 2228 (PEPEKQRTPQDNQLT) the chain is on the cytoplasmic side. The chain crosses the membrane as a helical span at residues 2229-2249 (YVVIAILTVVAATMANEMGFL). The Lumenal portion of the chain corresponds to 2250–2274 (EKTKKDLGLGSIATQQPESNILDID). The helical intramembrane region spans 2275–2295 (LRPASAWTLYAVATTFVTPML). Residues 2296–2316 (RHSIENSSVNVSLTAIANQAT) lie on the Lumenal side of the membrane. N-linked (GlcNAc...) asparagine; by host glycosylation is found at N2301 and N2305. The helical intramembrane region spans 2317–2337 (VLMGLGKGWPLSKMDIGVPLL). Residues 2338–2347 (AIGCYSQVNP) lie on the Lumenal side of the membrane. The helical transmembrane segment at 2348–2368 (TTLTAALFLLVAHYAIIGPAL) threads the bilayer. Residues 2369 to 2413 (QAKASREAQKRAAAGIMKNPTVDGITVIDLDPIPYDPKFEKQLGQ) are Cytoplasmic-facing. Residues 2414 to 2434 (VMLLVLCVTQVLMMRTTWALC) traverse the membrane as a helical segment. Residues 2435 to 2459 (EVLTLATGPISTLWEGNPGRFWNTT) are Lumenal-facing. Residue N2457 is glycosylated (N-linked (GlcNAc...) asparagine; by host). A helical membrane pass occupies residues 2460–2480 (IAVSMANIFRGSYLAGAGLLF). Over 2481–3391 (SIMKNTTNAR…REEEEAGVLW (911 aa)) the chain is Cytoplasmic. The mRNA cap 0-1 NS5-type MT domain maps to 2493-2755 (TGNIGETLGE…DVDLGSGTRN (263 aa)). S2547 is an S-adenosyl-L-methionine binding site. A Phosphoserine modification is found at S2547. The For 2'-O-MTase activity role is filled by K2552. An SUMO-interacting motif motif is present at residues 2568-2571 (VVDL). G2577, W2578, T2595, K2596, D2622, and V2623 together coordinate S-adenosyl-L-methionine. D2637 (for 2'-O-MTase activity) is an active-site residue. Residue I2638 participates in S-adenosyl-L-methionine binding. Residues K2672 and E2708 each act as for 2'-O-MTase activity in the active site. Y2710 is a binding site for S-adenosyl-L-methionine. Zn(2+) is bound by residues E2929, H2933, C2938, and C2941. The RdRp catalytic domain maps to 3020–3169 (AMYADDTAGW…PLDDRLPSAL (150 aa)). Zn(2+) contacts are provided by H3203, C3219, and C3338.

In the N-terminal section; belongs to the class I-like SAM-binding methyltransferase superfamily. mRNA cap 0-1 NS5-type methyltransferase family. As to quaternary structure, homodimer. Interacts (via N-terminus) with host EXOC1 (via C-terminus); this interaction results in EXOC1 degradation through the proteasome degradation pathway. In terms of assembly, forms heterodimers with envelope protein E in the endoplasmic reticulum and Golgi. Homodimer; in the endoplasmic reticulum and Golgi. Interacts with protein prM. Interacts with non-structural protein 1. As to quaternary structure, homodimer; Homohexamer when secreted. Interacts with envelope protein E. Interacts with host PRKAA1. In terms of assembly, interacts (via N-terminus) with serine protease NS3. Forms a heterodimer with serine protease NS3. May form homooligomers. As to quaternary structure, forms a heterodimer with NS2B. Interacts with NS4B. Interacts with unphosphorylated RNA-directed RNA polymerase NS5; this interaction stimulates RNA-directed RNA polymerase NS5 guanylyltransferase activity. Interacts with host SHFL. In terms of assembly, interacts with host MAVS; this interaction inhibits the synthesis of IFN-beta. Interacts with host SHFL. Interacts with host AUP1; the interaction occurs in the presence of Dengue virus NS4B and induces lipophagy which facilitates production of virus progeny particles. May interact with host SRPRA and SEC61G. Interacts with serine protease NS3. As to quaternary structure, homodimer. Interacts with host STAT2; this interaction inhibits the phosphorylation of the latter, and, when all viral proteins are present (polyprotein), targets STAT2 for degradation. Interacts with serine protease NS3. Interacts with host PAF1 complex; the interaction may prevent the recruitment of the PAF1 complex to interferon-responsive genes, and thus reduces the immune response. In terms of processing, specific enzymatic cleavages in vivo yield mature proteins. Cleavages in the lumen of endoplasmic reticulum are performed by host signal peptidase, whereas cleavages in the cytoplasmic side are performed by serine protease NS3. Signal cleavage at the 2K-4B site requires a prior NS3 protease-mediated cleavage at the 4A-2K site. Post-translationally, cleaved in post-Golgi vesicles by a host furin, releasing the mature small envelope protein M, and peptide pr. This cleavage is incomplete as up to 30% of viral particles still carry uncleaved prM. N-glycosylated. In terms of processing, N-glycosylated. The excreted form is glycosylated and this is required for efficient secretion of the protein from infected cells. Post-translationally, acetylated by host KAT5. Acetylation modulates NS3 RNA-binding and unwinding activities and plays an important positive role for viral replication. Sumoylation of RNA-directed RNA polymerase NS5 increases NS5 protein stability allowing proper viral RNA replication. In terms of processing, phosphorylated on serines residues. This phosphorylation may trigger NS5 nuclear localization.

It localises to the virion. Its subcellular location is the host nucleus. The protein localises to the host cytoplasm. The protein resides in the host perinuclear region. It is found in the secreted. It localises to the virion membrane. Its subcellular location is the host endoplasmic reticulum membrane. The protein localises to the host mitochondrion. The catalysed reaction is Selective hydrolysis of -Xaa-Xaa-|-Yaa- bonds in which each of the Xaa can be either Arg or Lys and Yaa can be either Ser or Ala.. It catalyses the reaction RNA(n) + a ribonucleoside 5'-triphosphate = RNA(n+1) + diphosphate. It carries out the reaction a ribonucleoside 5'-triphosphate + H2O = a ribonucleoside 5'-diphosphate + phosphate + H(+). The enzyme catalyses ATP + H2O = ADP + phosphate + H(+). The catalysed reaction is a 5'-end (5'-triphosphoguanosine)-ribonucleoside in mRNA + S-adenosyl-L-methionine = a 5'-end (N(7)-methyl 5'-triphosphoguanosine)-ribonucleoside in mRNA + S-adenosyl-L-homocysteine. It catalyses the reaction a 5'-end (N(7)-methyl 5'-triphosphoguanosine)-ribonucleoside in mRNA + S-adenosyl-L-methionine = a 5'-end (N(7)-methyl 5'-triphosphoguanosine)-(2'-O-methyl-ribonucleoside) in mRNA + S-adenosyl-L-homocysteine + H(+). Its function is as follows. Plays a role in virus budding by binding to the cell membrane and gathering the viral RNA into a nucleocapsid that forms the core of a mature virus particle. During virus entry, may induce genome penetration into the host cytoplasm after hemifusion induced by the surface proteins. Can migrate to the cell nucleus where it modulates host functions. Overcomes the anti-viral effects of host EXOC1 by sequestering and degrading the latter through the proteasome degradation pathway. In terms of biological role, inhibits RNA silencing by interfering with host Dicer. Prevents premature fusion activity of envelope proteins in trans-Golgi by binding to envelope protein E at pH6.0. After virion release in extracellular space, gets dissociated from E dimers. Functionally, acts as a chaperone for envelope protein E during intracellular virion assembly by masking and inactivating envelope protein E fusion peptide. prM is the only viral peptide matured by host furin in the trans-Golgi network probably to avoid catastrophic activation of the viral fusion activity in acidic Golgi compartment prior to virion release. prM-E cleavage is inefficient, and many virions are only partially matured. These uncleaved prM would play a role in immune evasion. Its function is as follows. May play a role in virus budding. Exerts cytotoxic effects by activating a mitochondrial apoptotic pathway through M ectodomain. May display a viroporin activity. In terms of biological role, binds to host cell surface receptor and mediates fusion between viral and cellular membranes. Envelope protein is synthesized in the endoplasmic reticulum in the form of heterodimer with protein prM. They play a role in virion budding in the ER, and the newly formed immature particle is covered with 60 spikes composed of heterodimer between precursor prM and envelope protein E. The virion is transported to the Golgi apparatus where the low pH causes dissociation of PrM-E heterodimers and formation of E homodimers. prM-E cleavage is inefficient, and many virions are only partially matured. These uncleaved prM would play a role in immune evasion. Involved in immune evasion, pathogenesis and viral replication. Once cleaved off the polyprotein, is targeted to three destinations: the viral replication cycle, the plasma membrane and the extracellular compartment. Essential for viral replication. Required for formation of the replication complex and recruitment of other non-structural proteins to the ER-derived membrane structures. Excreted as a hexameric lipoparticle that plays a role against host immune response. Antagonizing the complement function. Binds to the host macrophages and dendritic cells. Inhibits signal transduction originating from Toll-like receptor 3 (TLR3). Functionally, involved in immune evasion, pathogenesis and viral replication. Once cleaved off the polyprotein, is targeted to three destinations: the viral replication cycle, the plasma membrane and the extracellular compartment. Essential for viral replication. Required for formation of the replication complex and recruitment of other non-structural proteins to the ER-derived membrane structures. Excreted as a hexameric lipoparticle that plays a role against host immune response. Antagonizing the complement function. Binds to the host macrophages and dendritic cells. Inhibits signal transduction originating from Toll-like receptor 3 (TLR3). Mediates complement activation, which may contribute to the pathogenesis of the vascular leakage that occurs in severe dengue disease. Activates autophagy through the AMPK/ERK/mTOR signaling pathway. Mechanistically, acts as the assembly platform for STK11-AMPK interactions and promotes STK11-AMPK interactions. In turn, promotes phosphorylation of the AMPK kinase structural domain and activates AMPK, thereby positively regulating the AMPK/ERK/mTOR signaling pathway and inducing autophagy. Its function is as follows. Component of the viral RNA replication complex that functions in virion assembly and antagonizes the host immune response. In terms of biological role, required cofactor for the serine protease function of NS3. May have membrane-destabilizing activity and form viroporins. Displays three enzymatic activities: serine protease, NTPase and RNA helicase. NS3 serine protease, in association with NS2B, performs its autocleavage and cleaves the polyprotein at dibasic sites in the cytoplasm: C-prM, NS2A-NS2B, NS2B-NS3, NS3-NS4A, NS4A-2K and NS4B-NS5. NS3 RNA helicase binds RNA and unwinds dsRNA in the 3' to 5' direction. Functionally, regulates the ATPase activity of the NS3 helicase activity. NS4A allows NS3 helicase to conserve energy during unwinding. Plays a role in the inhibition of the host innate immune response. Interacts with host MAVS and thereby prevents the interaction between RIGI and MAVS. In turn, IFN-beta production is impaired. Interacts with host AUP1 which mediates induction of lipophagy in host cells and facilitates production of virus progeny particles. Its function is as follows. Functions as a signal peptide for NS4B and is required for the interferon antagonism activity of the latter. In terms of biological role, induces the formation of ER-derived membrane vesicles where the viral replication takes place. Inhibits interferon (IFN)-induced host STAT1 phosphorylation and nuclear translocation, thereby preventing the establishment of cellular antiviral state by blocking the IFN-alpha/beta pathway. Replicates the viral (+) and (-) RNA genome, and performs the capping of genomes in the cytoplasm. NS5 methylates viral RNA cap at guanine N-7 and ribose 2'-O positions. Besides its role in RNA genome replication, also prevents the establishment of cellular antiviral state by blocking the interferon-alpha/beta (IFN-alpha/beta) signaling pathway. Inhibits host TYK2 and STAT2 phosphorylation, thereby preventing activation of JAK-STAT signaling pathway. May reduce immune responses by preventing the recruitment of the host PAF1 complex to interferon-responsive genes. This Aedes aegypti (Yellowfever mosquito) protein is Genome polyprotein.